Here is a 352-residue protein sequence, read N- to C-terminus: Sulfate-binding protein (352 aa).

Positions 1 to 40 (MARSAFGWGFSVIAVLMVGSITACNTTTTTEPGQGENASQ) are cleaved as a signal peptide.

Belongs to the prokaryotic sulfate-binding protein family.

The protein localises to the periplasm. Its function is as follows. This protein specifically binds sulfate and is involved in its transmembrane transport. This is Sulfate-binding protein (sbpA) from Synechocystis sp. (strain ATCC 27184 / PCC 6803 / Kazusa).